A 623-amino-acid polypeptide reads, in one-letter code: ATP-dependent lipid A-core flippase (623 aa).

5 helical membrane-spanning segments follow: residues 66 to 86 (LVLA…LAVI), 103 to 123 (VWFL…CNFF), 190 to 210 (LVVI…TLII), 290 to 310 (LTPL…AVAL), and 317 to 337 (ALTV…FDPI). The 283-residue stretch at 67 to 349 (VLAVLLMAGA…LTNLAGKMQK (283 aa)) folds into the ABC transmembrane type-1 domain. Residues 382 to 618 (VEFRAVSHRF…NGLYASLYNM (237 aa)) form the ABC transporter domain. ATP is bound at residue 416 to 423 (GRSGSGKT).

This sequence belongs to the ABC transporter superfamily. Lipid exporter (TC 3.A.1.106) family. As to quaternary structure, homodimer.

Its subcellular location is the cell inner membrane. The enzyme catalyses ATP + H2O + lipid A-core oligosaccharideSide 1 = ADP + phosphate + lipid A-core oligosaccharideSide 2.. In terms of biological role, involved in lipopolysaccharide (LPS) biosynthesis. Translocates lipid A-core from the inner to the outer leaflet of the inner membrane. Transmembrane domains (TMD) form a pore in the inner membrane and the ATP-binding domain (NBD) is responsible for energy generation. In Bordetella pertussis (strain Tohama I / ATCC BAA-589 / NCTC 13251), this protein is ATP-dependent lipid A-core flippase.